The primary structure comprises 279 residues: H-2 class II histocompatibility antigen gamma chain (279 aa).

Residues 1 to 23 (MDDQRDLISNHEQLPILGNRPRE) are disordered. The Cytoplasmic segment spans residues 1-29 (MDDQRDLISNHEQLPILGNRPREPERCSR). Ser9 carries the phosphoserine modification. The chain crosses the membrane as a helical; Signal-anchor for type II membrane protein span at residues 30–55 (GALYTGVSVLVALLLAGQATTAYFLY). At 56–279 (QQQGRLDKLT…TRQELGQVTL (224 aa)) the chain is on the extracellular side. N-linked (GlcNAc...) asparagine glycosylation is found at Asn113 and Asn119. Residues 193–254 (LTKCQEEVSH…HTKSRGRHNC (62 aa)) form the Thyroglobulin type-1 domain. 3 disulfides stabilise this stretch: Cys196–Cys215, Cys226–Cys233, and Cys235–Cys254. O-linked (Xyl...) (chondroitin sulfate) serine glycosylation occurs at Ser265.

Nonamer composed of three alpha/beta/gamma heterotrimers. Interacts with CD44; this complex is essential for the MIF-induced signaling cascade that results in B cell survival. As to quaternary structure, interacts with the mature form of CTSL; the complex survive in neutral pH environment. In terms of tissue distribution, expressed in thymus and lymph noodes. Expressed by antigen-presenting cells (APCs). Expressed in thymus and lymph noodes.

The protein resides in the late endosome. It localises to the lysosome. The protein localises to the cell membrane. It is found in the endoplasmic reticulum membrane. Its subcellular location is the golgi apparatus. The protein resides in the trans-Golgi network. It localises to the endosome. The protein localises to the secreted. Its function is as follows. Plays a critical role in MHC class II antigen processing by stabilizing peptide-free class II alpha/beta heterodimers in a complex soon after their synthesis and directing transport of the complex from the endoplasmic reticulum to compartments where peptide loading of class II takes place. Enhance also the stimulation of T-cell responses through interaction with CD44. Functionally, stabilizes the conformation of mature CTSL by binding to its active site and serving as a chaperone to help maintain a pool of mature enzyme in endocytic compartments and extracellular space of antigen-presenting cells (APCs). Binds to the peptide-binding site of MHC class II alpha/beta heterodimers forming an alpha-beta-CLIP complex, thereby preventing the loading of antigenic peptides to the MHC class II complex until its release by HLA-DM in the endosome. The polypeptide is H-2 class II histocompatibility antigen gamma chain (Mus musculus (Mouse)).